Consider the following 396-residue polypeptide: Pectate lyase 5 (396 aa).

The signal sequence occupies residues 1–25 (MGIKHCCYILYFTLALVTLLQPVRS). A glycan (N-linked (GlcNAc...) asparagine) is linked at asparagine 36. Residues cysteine 53 and cysteine 70 are joined by a disulfide bond. Ca(2+)-binding residues include aspartate 193, aspartate 217, and aspartate 221. The active site involves arginine 273.

Belongs to the polysaccharide lyase 1 family. Amb a subfamily. As to quaternary structure, monomer. Ca(2+) serves as cofactor. The N-terminus is blocked. Pollen and flowers.

The catalysed reaction is Eliminative cleavage of (1-&gt;4)-alpha-D-galacturonan to give oligosaccharides with 4-deoxy-alpha-D-galact-4-enuronosyl groups at their non-reducing ends.. It participates in glycan metabolism; pectin degradation; 2-dehydro-3-deoxy-D-gluconate from pectin: step 2/5. Its function is as follows. Has pectate lyase activity. The chain is Pectate lyase 5 from Ambrosia artemisiifolia (Common ragweed).